A 409-amino-acid chain; its full sequence is Glucose-1-phosphate adenylyltransferase (409 aa).

Alpha-D-glucose 1-phosphate-binding positions include G168, 183–184 (EK), and S201.

It belongs to the bacterial/plant glucose-1-phosphate adenylyltransferase family. Homotetramer.

It catalyses the reaction alpha-D-glucose 1-phosphate + ATP + H(+) = ADP-alpha-D-glucose + diphosphate. The protein operates within glycan biosynthesis; glycogen biosynthesis. Involved in the biosynthesis of ADP-glucose, a building block required for the elongation reactions to produce glycogen. Catalyzes the reaction between ATP and alpha-D-glucose 1-phosphate (G1P) to produce pyrophosphate and ADP-Glc. The protein is Glucose-1-phosphate adenylyltransferase of Corynebacterium glutamicum (strain R).